Reading from the N-terminus, the 1136-residue chain is Nuclear pore complex protein Nup133 (1136 aa).

The disordered stretch occupies residues 1-26 (MFSPRGTPGSGRRQAPRTGGRRSVSA).

Belongs to the nucleoporin Nup133 family. In terms of assembly, forms part of the Nup160 subcomplex in the nuclear pore which is composed of NUP160, NUP133, NUP107 and Nup96. This complex plays a role in RNA export and in tethering Nup98 and NUP153 to the nucleus. Widely expressed in the embryo and in adult tissues. Higher expression is observed in the brain, testes, ovary, skin, and kidney.

The protein resides in the nucleus. It is found in the nuclear pore complex. The protein localises to the chromosome. It localises to the centromere. Its subcellular location is the kinetochore. Its function is as follows. Involved in poly(A)+ RNA transport. Involved in nephrogenesis. In Danio rerio (Zebrafish), this protein is Nuclear pore complex protein Nup133.